Here is a 145-residue protein sequence, read N- to C-terminus: Transcription antitermination protein NusB (145 aa).

It belongs to the NusB family.

In terms of biological role, involved in transcription antitermination. Required for transcription of ribosomal RNA (rRNA) genes. Binds specifically to the boxA antiterminator sequence of the ribosomal RNA (rrn) operons. In Burkholderia cenocepacia (strain HI2424), this protein is Transcription antitermination protein NusB.